A 343-amino-acid chain; its full sequence is Cathepsin Q (343 aa).

An N-terminal signal peptide occupies residues Met-1–Ala-20. Positions Leu-21–Ala-124 are cleaved as a propeptide — activation peptide. 2 disulfide bridges follow: Cys-146-Cys-189 and Cys-180-Cys-222. The active site involves Cys-149. N-linked (GlcNAc...) asparagine glycosylation is present at Asn-228. A disulfide bond links Cys-280 and Cys-332. His-286 is a catalytic residue. An N-linked (GlcNAc...) asparagine glycan is attached at Asn-298. Asn-310 is an active-site residue.

The protein belongs to the peptidase C1 family. As to expression, highly expressed in placenta.

Its subcellular location is the lysosome. This is Cathepsin Q (Ctsq) from Rattus norvegicus (Rat).